A 595-amino-acid polypeptide reads, in one-letter code: Aspartate--tRNA ligase (595 aa).

E173 provides a ligand contact to L-aspartate. The segment at 197-200 (QLFK) is aspartate. R219 provides a ligand contact to L-aspartate. Residues 219–221 (RDE) and Q228 each bind ATP. H449 is a binding site for L-aspartate. Residue E483 participates in ATP binding. R490 is a binding site for L-aspartate. An ATP-binding site is contributed by 535–538 (GLDR).

It belongs to the class-II aminoacyl-tRNA synthetase family. Type 1 subfamily. As to quaternary structure, homodimer.

The protein localises to the cytoplasm. It catalyses the reaction tRNA(Asp) + L-aspartate + ATP = L-aspartyl-tRNA(Asp) + AMP + diphosphate. Its function is as follows. Catalyzes the attachment of L-aspartate to tRNA(Asp) in a two-step reaction: L-aspartate is first activated by ATP to form Asp-AMP and then transferred to the acceptor end of tRNA(Asp). The chain is Aspartate--tRNA ligase from Shewanella woodyi (strain ATCC 51908 / MS32).